A 224-amino-acid polypeptide reads, in one-letter code: Phosphoribosylformylglycinamidine synthase subunit PurQ (224 aa).

The Glutamine amidotransferase type-1 domain occupies 1–224 (MIAIIKFPGT…ILLRRLGEWA (224 aa)). The active-site Nucleophile is the C84. Catalysis depends on residues H196 and E198.

As to quaternary structure, part of the FGAM synthase complex composed of 1 PurL, 1 PurQ and 2 PurS subunits.

Its subcellular location is the cytoplasm. It carries out the reaction N(2)-formyl-N(1)-(5-phospho-beta-D-ribosyl)glycinamide + L-glutamine + ATP + H2O = 2-formamido-N(1)-(5-O-phospho-beta-D-ribosyl)acetamidine + L-glutamate + ADP + phosphate + H(+). The catalysed reaction is L-glutamine + H2O = L-glutamate + NH4(+). It participates in purine metabolism; IMP biosynthesis via de novo pathway; 5-amino-1-(5-phospho-D-ribosyl)imidazole from N(2)-formyl-N(1)-(5-phospho-D-ribosyl)glycinamide: step 1/2. Its function is as follows. Part of the phosphoribosylformylglycinamidine synthase complex involved in the purines biosynthetic pathway. Catalyzes the ATP-dependent conversion of formylglycinamide ribonucleotide (FGAR) and glutamine to yield formylglycinamidine ribonucleotide (FGAM) and glutamate. The FGAM synthase complex is composed of three subunits. PurQ produces an ammonia molecule by converting glutamine to glutamate. PurL transfers the ammonia molecule to FGAR to form FGAM in an ATP-dependent manner. PurS interacts with PurQ and PurL and is thought to assist in the transfer of the ammonia molecule from PurQ to PurL. The sequence is that of Phosphoribosylformylglycinamidine synthase subunit PurQ from Saccharolobus solfataricus (strain ATCC 35092 / DSM 1617 / JCM 11322 / P2) (Sulfolobus solfataricus).